A 145-amino-acid polypeptide reads, in one-letter code: D-aminoacyl-tRNA deacylase (145 aa).

A Gly-cisPro motif, important for rejection of L-amino acids motif is present at residues 137–138 (GP).

Belongs to the DTD family. As to quaternary structure, homodimer.

It localises to the cytoplasm. It carries out the reaction glycyl-tRNA(Ala) + H2O = tRNA(Ala) + glycine + H(+). The catalysed reaction is a D-aminoacyl-tRNA + H2O = a tRNA + a D-alpha-amino acid + H(+). Its function is as follows. An aminoacyl-tRNA editing enzyme that deacylates mischarged D-aminoacyl-tRNAs. Also deacylates mischarged glycyl-tRNA(Ala), protecting cells against glycine mischarging by AlaRS. Acts via tRNA-based rather than protein-based catalysis; rejects L-amino acids rather than detecting D-amino acids in the active site. By recycling D-aminoacyl-tRNA to D-amino acids and free tRNA molecules, this enzyme counteracts the toxicity associated with the formation of D-aminoacyl-tRNA entities in vivo and helps enforce protein L-homochirality. The protein is D-aminoacyl-tRNA deacylase of Pseudomonas putida (strain ATCC 47054 / DSM 6125 / CFBP 8728 / NCIMB 11950 / KT2440).